Consider the following 166-residue polypeptide: Large ribosomal subunit protein uL11 (166 aa).

Arg67 is modified (N5-methylarginine).

It belongs to the universal ribosomal protein uL11 family.

The chain is Large ribosomal subunit protein uL11 (RPL12) from Encephalitozoon cuniculi (strain GB-M1) (Microsporidian parasite).